Consider the following 181-residue polypeptide: Peptidyl-tRNA hydrolase 2, mitochondrial (181 aa).

The helical transmembrane segment at 10 to 32 threads the bilayer; sequence YLVHPGTLSLAAGVACGMCLGWG. Residues K78, K83, K97, K108, K117, and K179 each participate in a glycyl lysine isopeptide (Lys-Gly) (interchain with G-Cter in ubiquitin) cross-link.

This sequence belongs to the PTH2 family. In terms of assembly, monomer. Ubiquitinated by PRKN during mitophagy, leading to its degradation and enhancement of mitophagy. Deubiquitinated by USP30.

It localises to the mitochondrion outer membrane. It catalyses the reaction an N-acyl-L-alpha-aminoacyl-tRNA + H2O = an N-acyl-L-amino acid + a tRNA + H(+). Functionally, peptidyl-tRNA hydrolase which releases tRNAs from the ribosome during protein synthesis. Promotes caspase-independent apoptosis by regulating the function of two transcriptional regulators, AES and TLE1. In Mus musculus (Mouse), this protein is Peptidyl-tRNA hydrolase 2, mitochondrial (Ptrh2).